A 334-amino-acid polypeptide reads, in one-letter code: Glycerol-3-phosphate dehydrogenase [NAD(P)+] (334 aa).

Residues Ser11, Trp12, Arg32, and Lys106 each contribute to the NADPH site. Positions 106 and 136 each coordinate sn-glycerol 3-phosphate. Residue Ala140 participates in NADPH binding. 5 residues coordinate sn-glycerol 3-phosphate: Lys191, Asp244, Ser254, Arg255, and Asn256. Lys191 serves as the catalytic Proton acceptor. Arg255 provides a ligand contact to NADPH. NADPH is bound by residues Val279 and Glu281.

This sequence belongs to the NAD-dependent glycerol-3-phosphate dehydrogenase family.

The protein localises to the cytoplasm. The enzyme catalyses sn-glycerol 3-phosphate + NAD(+) = dihydroxyacetone phosphate + NADH + H(+). The catalysed reaction is sn-glycerol 3-phosphate + NADP(+) = dihydroxyacetone phosphate + NADPH + H(+). It functions in the pathway membrane lipid metabolism; glycerophospholipid metabolism. Its function is as follows. Catalyzes the reduction of the glycolytic intermediate dihydroxyacetone phosphate (DHAP) to sn-glycerol 3-phosphate (G3P), the key precursor for phospholipid synthesis. In Parafrankia sp. (strain EAN1pec), this protein is Glycerol-3-phosphate dehydrogenase [NAD(P)+].